Reading from the N-terminus, the 335-residue chain is N-acetyl-gamma-glutamyl-phosphate reductase (335 aa).

Cysteine 147 is an active-site residue.

It belongs to the NAGSA dehydrogenase family. Type 1 subfamily.

Its subcellular location is the cytoplasm. It carries out the reaction N-acetyl-L-glutamate 5-semialdehyde + phosphate + NADP(+) = N-acetyl-L-glutamyl 5-phosphate + NADPH + H(+). Its pathway is amino-acid biosynthesis; L-arginine biosynthesis; N(2)-acetyl-L-ornithine from L-glutamate: step 3/4. Catalyzes the NADPH-dependent reduction of N-acetyl-5-glutamyl phosphate to yield N-acetyl-L-glutamate 5-semialdehyde. The polypeptide is N-acetyl-gamma-glutamyl-phosphate reductase (Sulfurovum sp. (strain NBC37-1)).